The chain runs to 183 residues: Protein Syd (183 aa).

Belongs to the Syd family.

The protein localises to the cell inner membrane. Its function is as follows. Interacts with the SecY protein in vivo. May bind preferentially to an uncomplexed state of SecY, thus functioning either as a chelating agent for excess SecY in the cell or as a regulatory factor that negatively controls the translocase function. This Yersinia pseudotuberculosis serotype O:1b (strain IP 31758) protein is Protein Syd.